We begin with the raw amino-acid sequence, 277 residues long: MSSCSRVALVTGANKGIGFAITRDLCRKFSGDVVLTARDEARGRAAVKQLQAEGLSPRFHQLDIDNPQSIRALRDFLRKEYGGLNVLVNNAGIAFRMDDPTPFDVQAEVTLKTNFFATRNVCTELLPIMKPHGRVVNVSSLQGLKALENCSEDLQERFRCDTLTEGDLVDLMKKFVEDTKNEVHEREGWPDSAYGVSKLGVTVLTRILARQLDEKRKADRILLNACCPGWVKTDMARDQGSRTVEEGAETPVYLALLPPDATEPHGQLVRDKVVQTW.

At serine 2 the chain carries N-acetylserine. NADP(+)-binding positions include 10-34 (VTGANKGIGFAITRDLCRKFSGDVV), 38-42 (RDEAR), 63-64 (DI), and asparagine 90. Residue serine 30 is modified to Phosphoserine. Serine 140 contacts substrate. Catalysis depends on tyrosine 194, which acts as the Proton acceptor. Position 194-198 (194-198 (YGVSK)) interacts with NADP(+).

This sequence belongs to the short-chain dehydrogenases/reductases (SDR) family.

It localises to the cytoplasm. It catalyses the reaction a secondary alcohol + NADP(+) = a ketone + NADPH + H(+). The catalysed reaction is a quinone + NADPH + H(+) = a quinol + NADP(+). Catalyzes the NADPH-dependent reduction of carbonyl compounds to their corresponding alcohols. Has low NADPH-dependent oxidoreductase activity. Acts on several orthoquinones, as well as on non-quinone compounds, such as isatin or on the anticancer drug oracin. Best substrates for CBR3 is 1,2- naphthoquinone, hence could play a role in protection against cytotoxicity of exogenous quinones. Exerts activity toward ortho-quinones but not paraquinones. No endogenous substrate for CBR3 except isatin has been identified. In Rattus norvegicus (Rat), this protein is Carbonyl reductase [NADPH] 3.